The following is a 290-amino-acid chain: uncharacterized protein (290 aa).

Helical transmembrane passes span 71–91 (FWSF…VKNI), 124–144 (GILI…LPGM), 155–175 (IIIG…YILV), 202–222 (FILV…LQLV), 234–254 (MFSI…VLTP), and 262–282 (ILLS…VLVV).

It belongs to the TatC family.

The protein localises to the plastid. Its subcellular location is the chloroplast membrane. This is an uncharacterized protein from Guillardia theta (Cryptophyte).